The sequence spans 451 residues: Probable phosphoglucosamine mutase (451 aa).

The active-site Phosphoserine intermediate is S96. Mg(2+) contacts are provided by S96, D233, D235, and D237. S96 is subject to Phosphoserine.

Belongs to the phosphohexose mutase family. Mg(2+) serves as cofactor. Post-translationally, activated by phosphorylation.

The catalysed reaction is alpha-D-glucosamine 1-phosphate = D-glucosamine 6-phosphate. Its function is as follows. Catalyzes the conversion of glucosamine-6-phosphate to glucosamine-1-phosphate. This chain is Probable phosphoglucosamine mutase, found in Pyrococcus horikoshii (strain ATCC 700860 / DSM 12428 / JCM 9974 / NBRC 100139 / OT-3).